Here is a 102-residue protein sequence, read N- to C-terminus: MALNEQDVARIARLARIELTPDQRGRAQAELNGILHLIERLQAVDTQGVEPLAHPLSAHEDITLRLREDAVSEQATEASRAELLANAPESADGLFLVPKVIE.

This sequence belongs to the GatC family. As to quaternary structure, heterotrimer of A, B and C subunits.

The enzyme catalyses L-glutamyl-tRNA(Gln) + L-glutamine + ATP + H2O = L-glutaminyl-tRNA(Gln) + L-glutamate + ADP + phosphate + H(+). It carries out the reaction L-aspartyl-tRNA(Asn) + L-glutamine + ATP + H2O = L-asparaginyl-tRNA(Asn) + L-glutamate + ADP + phosphate + 2 H(+). Functionally, allows the formation of correctly charged Asn-tRNA(Asn) or Gln-tRNA(Gln) through the transamidation of misacylated Asp-tRNA(Asn) or Glu-tRNA(Gln) in organisms which lack either or both of asparaginyl-tRNA or glutaminyl-tRNA synthetases. The reaction takes place in the presence of glutamine and ATP through an activated phospho-Asp-tRNA(Asn) or phospho-Glu-tRNA(Gln). The sequence is that of Aspartyl/glutamyl-tRNA(Asn/Gln) amidotransferase subunit C from Bordetella bronchiseptica (strain ATCC BAA-588 / NCTC 13252 / RB50) (Alcaligenes bronchisepticus).